The chain runs to 1132 residues: Major DNA-binding protein (1132 aa).

The tract at residues 1103–1132 (VEELFPSPGVPSLTVGKKRKIASLLSDLDL) is required for nuclear localization.

It belongs to the herpesviridae major DNA-binding protein family. Homooligomers. Forms double-helical filaments necessary for the formation of replication compartments within the host nucleus. Interacts with the origin-binding protein. Interacts with the helicase primase complex; this interaction stimulates primer synthesis activity of the helicase-primase complex. Interacts with the DNA polymerase. Interacts with the alkaline exonuclease; this interaction increases its nuclease processivity.

It is found in the host nucleus. Plays several crucial roles in viral infection. Participates in the opening of the viral DNA origin to initiate replication by interacting with the origin-binding protein. May disrupt loops, hairpins and other secondary structures present on ssDNA to reduce and eliminate pausing of viral DNA polymerase at specific sites during elongation. Promotes viral DNA recombination by performing strand-transfer, characterized by the ability to transfer a DNA strand from a linear duplex to a complementary single-stranded DNA circle. Can also catalyze the renaturation of complementary single strands. Additionally, reorganizes the host cell nucleus, leading to the formation of prereplicative sites and replication compartments. This process is driven by the protein which can form double-helical filaments in the absence of DNA. This is Major DNA-binding protein from Human herpesvirus 8 type P (isolate GK18) (HHV-8).